Here is a 271-residue protein sequence, read N- to C-terminus: Protein-L-isoaspartate O-methyltransferase (271 aa).

The span at 1–15 shows a compositional bias: pro residues; it reads MRKPVTPPGNPPRPR. The disordered stretch occupies residues 1–60; the sequence is MRKPVTPPGNPPRPRSPGYGSTSLAPGITAANSNTRISPPTLARPAPAAGAGGQGGNLGL. Residues 39-49 show a composition bias toward low complexity; it reads PPTLARPAPAA. The active site involves S119.

Belongs to the methyltransferase superfamily. L-isoaspartyl/D-aspartyl protein methyltransferase family.

It localises to the cytoplasm. The enzyme catalyses [protein]-L-isoaspartate + S-adenosyl-L-methionine = [protein]-L-isoaspartate alpha-methyl ester + S-adenosyl-L-homocysteine. Catalyzes the methyl esterification of L-isoaspartyl residues in peptides and proteins that result from spontaneous decomposition of normal L-aspartyl and L-asparaginyl residues. It plays a role in the repair and/or degradation of damaged proteins. This chain is Protein-L-isoaspartate O-methyltransferase, found in Bordetella petrii (strain ATCC BAA-461 / DSM 12804 / CCUG 43448).